The chain runs to 342 residues: Probable RNA methyltransferase PST_2231 (342 aa).

The active-site Proton acceptor is Glu91. The Radical SAM core domain maps to 94-320 (LLPRDGLCVS…TKVRNSAGQD (227 aa)). A disulfide bridge connects residues Cys101 and Cys325. Residues Cys108, Cys112, and Cys115 each contribute to the [4Fe-4S] cluster site. S-adenosyl-L-methionine is bound by residues 153–154 (GE), Ser183, 206–208 (SLH), and Asn282. The active-site S-methylcysteine intermediate is Cys325.

Belongs to the radical SAM superfamily. RlmN family. Requires [4Fe-4S] cluster as cofactor.

It localises to the cytoplasm. The polypeptide is Probable RNA methyltransferase PST_2231 (Stutzerimonas stutzeri (strain A1501) (Pseudomonas stutzeri)).